Here is a 376-residue protein sequence, read N- to C-terminus: Chaperone protein DnaJ (376 aa).

Residues 5–70 (DYYEVLGVAK…QKRAAYDQYG (66 aa)) enclose the J domain. A CR-type zinc finger spans residues 136–214 (GYDTQIRVPS…CHGSGKVKET (79 aa)). 8 residues coordinate Zn(2+): cysteine 149, cysteine 152, cysteine 166, cysteine 169, cysteine 188, cysteine 191, cysteine 202, and cysteine 205. 4 CXXCXGXG motif repeats span residues 149–156 (CGVCHGSG), 166–173 (CPTCHGQG), 188–195 (CPKCHGTG), and 202–209 (CVHCHGSG).

This sequence belongs to the DnaJ family. In terms of assembly, homodimer. Requires Zn(2+) as cofactor.

It is found in the cytoplasm. Participates actively in the response to hyperosmotic and heat shock by preventing the aggregation of stress-denatured proteins and by disaggregating proteins, also in an autonomous, DnaK-independent fashion. Unfolded proteins bind initially to DnaJ; upon interaction with the DnaJ-bound protein, DnaK hydrolyzes its bound ATP, resulting in the formation of a stable complex. GrpE releases ADP from DnaK; ATP binding to DnaK triggers the release of the substrate protein, thus completing the reaction cycle. Several rounds of ATP-dependent interactions between DnaJ, DnaK and GrpE are required for fully efficient folding. Also involved, together with DnaK and GrpE, in the DNA replication of plasmids through activation of initiation proteins. The protein is Chaperone protein DnaJ of Burkholderia pseudomallei (strain 1710b).